A 383-amino-acid polypeptide reads, in one-letter code: GA-binding protein subunit beta-1 (383 aa).

Serine 2 is modified (N-acetylserine). ANK repeat units follow at residues 5–34 (DLGKKLLEAARAGQDDEVRILMANGAPFTT) and 37–66 (LGTSPLHLAAQYGHYSTTEVLLRAGVSRDA). At lysine 69 the chain carries N6-acetyllysine. 3 ANK repeats span residues 70–99 (VDRTPLHMAASEGHASIVEVLLKHGADVNA), 103–132 (LKMTALHWATEHNHQEVVELLIKYGADVHT), and 136–166 (FCKTAFDISIDNGNEDLAEILQIAMQNQINT). 2 positions are modified to N6-acetyllysine: lysine 340 and lysine 369.

In terms of assembly, heterotetramer of two alpha and two beta subunits. Interacts with HCFC1, causing repression of transcriptional activity. Post-translationally, acetylated by EP300/p300. Deacetylated by SIRT7, promoting heterotetramerization and activity.

The protein resides in the nucleus. Transcription factor capable of interacting with purine rich repeats (GA repeats). Acts as a master regulator of nuclear-encoded mitochondrial genes. The chain is GA-binding protein subunit beta-1 (GABPB1) from Bos taurus (Bovine).